Consider the following 1317-residue polypeptide: Putative late blight resistance protein homolog R1B-14 (1317 aa).

Coiled-coil stretches lie at residues 419-442 (RYSD…ESLQ) and 535-556 (RMNE…RLLN). The NB-ARC domain occupies 521-823 (TVITHTSSQL…SESFIKSSEG (303 aa)). 568-575 (GMPGLGKT) is a binding site for ATP. 6 LRR repeats span residues 944 to 968 (FKFL…LFYL), 987 to 1015 (LWNL…IWDM), 1090 to 1114 (PIRL…ISAP), 1138 to 1161 (LKHL…KVSN), 1164 to 1186 (FPQL…ADDA), and 1187 to 1211 (FPNL…FMDI). The HMA domain occupies 1251-1317 (IKKMVLKFDI…VSKLRKRGML (67 aa)).

The protein belongs to the disease resistance NB-LRR family.

The protein resides in the cytoplasm. The protein localises to the membrane. Functionally, confers resistance to late blight (Phytophthora infestans) races carrying the avirulence gene Avr1. Resistance proteins guard the plant against pathogens that contain an appropriate avirulence protein via an indirect interaction with this avirulence protein. That triggers a defense system including the hypersensitive response, which restricts the pathogen growth. This Solanum demissum (Wild potato) protein is Putative late blight resistance protein homolog R1B-14 (R1B-14).